The following is a 504-amino-acid chain: Probable cytosol aminopeptidase (504 aa).

The Mn(2+) site is built by K272 and D277. K284 is an active-site residue. D295, D354, and E356 together coordinate Mn(2+). R358 is an active-site residue.

Belongs to the peptidase M17 family. It depends on Mn(2+) as a cofactor.

It is found in the cytoplasm. The catalysed reaction is Release of an N-terminal amino acid, Xaa-|-Yaa-, in which Xaa is preferably Leu, but may be other amino acids including Pro although not Arg or Lys, and Yaa may be Pro. Amino acid amides and methyl esters are also readily hydrolyzed, but rates on arylamides are exceedingly low.. The enzyme catalyses Release of an N-terminal amino acid, preferentially leucine, but not glutamic or aspartic acids.. Presumably involved in the processing and regular turnover of intracellular proteins. Catalyzes the removal of unsubstituted N-terminal amino acids from various peptides. The sequence is that of Probable cytosol aminopeptidase from Chlorobaculum tepidum (strain ATCC 49652 / DSM 12025 / NBRC 103806 / TLS) (Chlorobium tepidum).